The sequence spans 399 residues: Ras-related GTP-binding protein C (399 aa).

The interval 1–20 is disordered; it reads MSLQYGAEETPLAGSYGAAD. The residue at position 2 (S2) is an N-acetylserine. S2 and S15 each carry phosphoserine. The GDP site is built by R71, S72, G73, K74, S75, S76, T90, E94, T96, H178, K179, D181, S219, and I220. K74 lines the GTP pocket. T90 serves as a coordination point for GTP. Position 96 (T96) interacts with GTP. T96 is subject to Phosphothreonine. D181 contributes to the GTP binding site.

It belongs to the GTR/RAG GTP-binding protein family. Forms a heterodimer with RRAGA, in a sequence-independent manner, and RRAGB. Heterodimerization stabilizes proteins of the heterodimer. The GDP-bound form of RRAGC (in complex with the GTP-bound form of RRAGA or RRAGB), interacts with RPTOR, thereby promoting recruitment of mTORC1 to the lysosomes. Component of the lysosomal folliculin complex (LFC), composed of FLCN, FNIP1 (or FNIP2), RagA/RRAGA or RagB/RRAGB GDP-bound, RagC/RRAGC or RagD/RRAGD GTP-bound, and Ragulator. Interacts with NOL8. Interacts with SH3BP4; the interaction with this negative regulator is most probably direct, preferentially occurs with the inactive GDP-bound form of RRAGB, is negatively regulated by amino acids and prevents interaction with RPTOR. The Rag heterodimer interacts with SLC38A9; the probable amino acid sensor. Interacts with SESN1, SESN2 and SESN3. Interacts with PIP4P1. The Rag heterodimer interacts with the Ragulator complex. The GDP-bound form interacts with TFEB. The GDP-bound form interacts with TFE3.

Its subcellular location is the cytoplasm. The protein localises to the nucleus. It localises to the lysosome membrane. It catalyses the reaction GTP + H2O = GDP + phosphate + H(+). With respect to regulation, the activation of RagC/RRAGC is mediated by a GTPase activating protein (GAP). In high-amino acid conditions, activated by GTPase activating protein FLCN that stimulates RRAGC GTPase activity to turn it into its active GDP-bound form. In response to amino acid depletion, the GATOR1 complex inactivates RagC/RRAGC by securing the GTP-bound inactive form. Its function is as follows. Guanine nucleotide-binding protein that plays a crucial role in the cellular response to amino acid availability through regulation of the mTORC1 signaling cascade. Forms heterodimeric Rag complexes with RagA/RRAGA or RagB/RRAGB and cycles between an inactive GTP-bound and an active GDP-bound form: RagC/RRAGC is in its active form when GDP-bound RagC/RRAGC forms a complex with GTP-bound RagA/RRAGA (or RagB/RRAGB) and in an inactive form when GTP-bound RagC/RRAGC heterodimerizes with GDP-bound RagA/RRAGA (or RagB/RRAGB). In its GDP-bound active form, promotes the recruitment of mTORC1 to the lysosomes and its subsequent activation by the GTPase RHEB. This is a crucial step in the activation of the MTOR signaling cascade by amino acids. Also plays a central role in the non-canonical mTORC1 complex, which acts independently of RHEB and specifically mediates phosphorylation of MiT/TFE factors TFEB and TFE3: GDP-bound RagC/RRAGC mediates recruitment of MiT/TFE factors TFEB and TFE3. The protein is Ras-related GTP-binding protein C of Homo sapiens (Human).